Consider the following 313-residue polypeptide: Aspartate carbamoyltransferase catalytic subunit (313 aa).

Carbamoyl phosphate is bound by residues R51 and T52. Residue K80 coordinates L-aspartate. Carbamoyl phosphate is bound by residues R101, H129, and Q132. Residues R162 and R224 each coordinate L-aspartate. 2 residues coordinate carbamoyl phosphate: L263 and P264.

It belongs to the aspartate/ornithine carbamoyltransferase superfamily. ATCase family. Heterododecamer (2C3:3R2) of six catalytic PyrB chains organized as two trimers (C3), and six regulatory PyrI chains organized as three dimers (R2).

The catalysed reaction is carbamoyl phosphate + L-aspartate = N-carbamoyl-L-aspartate + phosphate + H(+). The protein operates within pyrimidine metabolism; UMP biosynthesis via de novo pathway; (S)-dihydroorotate from bicarbonate: step 2/3. Its function is as follows. Catalyzes the condensation of carbamoyl phosphate and aspartate to form carbamoyl aspartate and inorganic phosphate, the committed step in the de novo pyrimidine nucleotide biosynthesis pathway. The polypeptide is Aspartate carbamoyltransferase catalytic subunit (Bacteroides thetaiotaomicron (strain ATCC 29148 / DSM 2079 / JCM 5827 / CCUG 10774 / NCTC 10582 / VPI-5482 / E50)).